The primary structure comprises 158 residues: SsrA-binding protein (158 aa).

This sequence belongs to the SmpB family.

The protein resides in the cytoplasm. Its function is as follows. Required for rescue of stalled ribosomes mediated by trans-translation. Binds to transfer-messenger RNA (tmRNA), required for stable association of tmRNA with ribosomes. tmRNA and SmpB together mimic tRNA shape, replacing the anticodon stem-loop with SmpB. tmRNA is encoded by the ssrA gene; the 2 termini fold to resemble tRNA(Ala) and it encodes a 'tag peptide', a short internal open reading frame. During trans-translation Ala-aminoacylated tmRNA acts like a tRNA, entering the A-site of stalled ribosomes, displacing the stalled mRNA. The ribosome then switches to translate the ORF on the tmRNA; the nascent peptide is terminated with the 'tag peptide' encoded by the tmRNA and targeted for degradation. The ribosome is freed to recommence translation, which seems to be the essential function of trans-translation. This Bartonella quintana (strain Toulouse) (Rochalimaea quintana) protein is SsrA-binding protein.